The following is a 636-amino-acid chain: Biosynthetic arginine decarboxylase (636 aa).

Lys-101 carries the post-translational modification N6-(pyridoxal phosphate)lysine. 286-296 (FDVGGGLAVDY) is a binding site for substrate.

This sequence belongs to the Orn/Lys/Arg decarboxylase class-II family. SpeA subfamily. Mg(2+) serves as cofactor. It depends on pyridoxal 5'-phosphate as a cofactor.

It catalyses the reaction L-arginine + H(+) = agmatine + CO2. The protein operates within amine and polyamine biosynthesis; agmatine biosynthesis; agmatine from L-arginine: step 1/1. Catalyzes the biosynthesis of agmatine from arginine. The sequence is that of Biosynthetic arginine decarboxylase from Shewanella denitrificans (strain OS217 / ATCC BAA-1090 / DSM 15013).